The primary structure comprises 828 residues: Periplasmic nitrate reductase (828 aa).

Positions 1-31 form a signal peptide, tat-type signal; sequence MKLSRRSFMKANAVAAAAAAAGLSVPGVARA. Positions 39-95 constitute a 4Fe-4S Mo/W bis-MGD-type domain; that stretch reads IKWDKAPCRFCGTGCGVLVGTQQGRVVACQGDPDAPVNRGLNCIKGYFLPKIMYGKD. Cysteine 46, cysteine 49, cysteine 53, and cysteine 81 together coordinate [4Fe-4S] cluster. Mo-bis(molybdopterin guanine dinucleotide) contacts are provided by residues lysine 83, glutamine 150, asparagine 175, cysteine 179, 212–219, 243–247, 262–264, methionine 372, glutamine 376, asparagine 482, 508–509, lysine 531, aspartate 558, and 718–727; these read WGANMAEM, STYQH, QSD, SD, and TGRVLEHWHT. Phenylalanine 794 serves as a coordination point for substrate. 2 residues coordinate Mo-bis(molybdopterin guanine dinucleotide): asparagine 802 and lysine 819.

Belongs to the prokaryotic molybdopterin-containing oxidoreductase family. NasA/NapA/NarB subfamily. As to quaternary structure, component of the periplasmic nitrate reductase NapAB complex composed of NapA and NapB. The cofactor is [4Fe-4S] cluster. Requires Mo-bis(molybdopterin guanine dinucleotide) as cofactor. In terms of processing, predicted to be exported by the Tat system. The position of the signal peptide cleavage has not been experimentally proven.

It localises to the periplasm. The enzyme catalyses 2 Fe(II)-[cytochrome] + nitrate + 2 H(+) = 2 Fe(III)-[cytochrome] + nitrite + H2O. Catalytic subunit of the periplasmic nitrate reductase complex NapAB. Receives electrons from NapB and catalyzes the reduction of nitrate to nitrite. This is Periplasmic nitrate reductase from Shigella boydii serotype 18 (strain CDC 3083-94 / BS512).